Consider the following 347-residue polypeptide: UPF0284 protein SSO2213 (347 aa).

Belongs to the UPF0284 family.

The protein is UPF0284 protein SSO2213 of Saccharolobus solfataricus (strain ATCC 35092 / DSM 1617 / JCM 11322 / P2) (Sulfolobus solfataricus).